Consider the following 261-residue polypeptide: Kallikrein 1-related peptidase b16 (261 aa).

The signal sequence occupies residues M1 to A18. Residues P19–R24 constitute a propeptide, activation peptide. Positions I25–M258 constitute a Peptidase S1 domain. Disulfide bonds link C31-C173, C50-C66, C152-C219, C184-C198, and C209-C234. Residue H65 is the Charge relay system of the active site. The N-linked (GlcNAc...) asparagine glycan is linked to N102. The active-site Charge relay system is D120. The active-site Charge relay system is the S213.

It belongs to the peptidase S1 family. Kallikrein subfamily.

The enzyme catalyses Cleavage of the Leu-|-Leu bond in synthetic tetradecapeptide renin substrate, to produce angiotensin I, but not active on natural angiotensinogen. Also hydrolyzes Bz-Arg-p-nitroanilide.. The polypeptide is Kallikrein 1-related peptidase b16 (Klk1b16) (Mus musculus (Mouse)).